A 325-amino-acid chain; its full sequence is Solute-binding protein RD1_1052 (325 aa).

The signal sequence occupies residues 1–26 (MRLFTKIKGLAAVTCVAALASSAAFA). D-mannonate is bound by residues E75, 93–95 (GES), 148–151 (RGPR), R171, and N211. Residues E75, 93 to 95 (GES), 148 to 151 (RGPR), R171, and N211 each bind L-galactonate.

The protein belongs to the bacterial solute-binding protein 7 family. In terms of assembly, the complex is comprised of an extracytoplasmic solute-binding protein and a heteromeric permease formed by two transmembrane proteins.

The protein resides in the periplasm. In terms of biological role, solute-binding protein that binds L-galactonate and D-mannonate (in vitro). Probably part of a tripartite ATP-independent periplasmic (TRAP) transport system that mediates solute transport into the cytoplasm. This is Solute-binding protein RD1_1052 from Roseobacter denitrificans (strain ATCC 33942 / OCh 114) (Erythrobacter sp. (strain OCh 114)).